The sequence spans 391 residues: Anhydro-N-acetylmuramic acid kinase (391 aa).

An ATP-binding site is contributed by 9–16 (GTSVDGID).

This sequence belongs to the anhydro-N-acetylmuramic acid kinase family.

It carries out the reaction 1,6-anhydro-N-acetyl-beta-muramate + ATP + H2O = N-acetyl-D-muramate 6-phosphate + ADP + H(+). It participates in amino-sugar metabolism; 1,6-anhydro-N-acetylmuramate degradation. The protein operates within cell wall biogenesis; peptidoglycan recycling. Functionally, catalyzes the specific phosphorylation of 1,6-anhydro-N-acetylmuramic acid (anhMurNAc) with the simultaneous cleavage of the 1,6-anhydro ring, generating MurNAc-6-P. Is required for the utilization of anhMurNAc either imported from the medium or derived from its own cell wall murein, and thus plays a role in cell wall recycling. This is Anhydro-N-acetylmuramic acid kinase from Gloeothece citriformis (strain PCC 7424) (Cyanothece sp. (strain PCC 7424)).